A 391-amino-acid polypeptide reads, in one-letter code: BRCA1-A complex subunit Abraxas 1 (391 aa).

The MPN domain occupies 8-156; the sequence is VRISGFVLSS…THRLEFSAFI (149 aa). Residues 223 to 261 are a coiled coil; the sequence is LLAEMQKVCVEVEKSERTVEKLQEDIAQLKEAIGKQKTH. Positions 354–391 are disordered; that stretch reads QRLKRKRKTREVSESASESGSDTEIEMNGQSGSNSPVF. The segment covering 367 to 391 has biased composition (polar residues); that stretch reads ESASESGSDTEIEMNGQSGSNSPVF. Ser388 carries the phosphoserine modification. Positions 388-391 match the pSXXF motif motif; that stretch reads SPVF.

It belongs to the FAM175 family. Abraxas subfamily. As to quaternary structure, component of the ARISC complex. Component of the BRCA1-A complex. Homodimer. Post-translationally, phosphorylation of Ser-388 of the pSXXF motif by ATM or ATR constitutes a specific recognition motif for the BRCT domain of BRCA1.

Its subcellular location is the nucleus. In terms of biological role, involved in DNA damage response and double-strand break (DSB) repair. Component of the BRCA1-A complex, acting as a central scaffold protein that assembles the various components of the complex. The BRCA1-A complex specifically recognizes 'Lys-63'-linked ubiquitinated histones H2A and H2AX at DNA lesion sites. This complex also possesses deubiquitinase activity that specifically removes 'Lys-63'-linked ubiquitin on histones H2A and H2AX. The polypeptide is BRCA1-A complex subunit Abraxas 1 (Danio rerio (Zebrafish)).